The following is a 576-amino-acid chain: Probable DNA ligase (576 aa).

Glu-235 contributes to the ATP binding site. Lys-237 (N6-AMP-lysine intermediate) is an active-site residue. 6 residues coordinate ATP: Arg-242, Arg-257, Glu-285, Phe-324, Arg-422, and Lys-428.

The protein belongs to the ATP-dependent DNA ligase family. Requires Mg(2+) as cofactor.

It catalyses the reaction ATP + (deoxyribonucleotide)n-3'-hydroxyl + 5'-phospho-(deoxyribonucleotide)m = (deoxyribonucleotide)n+m + AMP + diphosphate.. Functionally, DNA ligase that seals nicks in double-stranded DNA during DNA replication, DNA recombination and DNA repair. The sequence is that of Probable DNA ligase from Koribacter versatilis (strain Ellin345).